Here is a 657-residue protein sequence, read N- to C-terminus: L-type lectin-domain containing receptor kinase I.8 (657 aa).

Positions methionine 1–glutamine 23 are cleaved as a signal peptide. The Extracellular portion of the chain corresponds to glutamine 24–serine 282. Residues glutamate 25–serine 257 form a legume-lectin like region. Asparagine 74, asparagine 124, asparagine 181, asparagine 204, and asparagine 225 each carry an N-linked (GlcNAc...) asparagine glycan. The chain crosses the membrane as a helical span at residues leucine 283 to alanine 303. The Cytoplasmic portion of the chain corresponds to tyrosine 304–arginine 657. The 273-residue stretch at phenylalanine 339 to leucine 611 folds into the Protein kinase domain. ATP-binding positions include leucine 345–valine 353 and lysine 366. Aspartate 462 serves as the catalytic Proton acceptor.

This sequence in the C-terminal section; belongs to the protein kinase superfamily. Ser/Thr protein kinase family. The protein in the N-terminal section; belongs to the leguminous lectin family.

It is found in the cell membrane. It carries out the reaction L-seryl-[protein] + ATP = O-phospho-L-seryl-[protein] + ADP + H(+). It catalyses the reaction L-threonyl-[protein] + ATP = O-phospho-L-threonyl-[protein] + ADP + H(+). Involved in resistance response to the pathogenic fungus Alternaria brassicicola. The polypeptide is L-type lectin-domain containing receptor kinase I.8 (Arabidopsis thaliana (Mouse-ear cress)).